A 1019-amino-acid chain; its full sequence is Photoactivated adenylate cyclase subunit alpha-like protein ST- (1019 aa).

The 94-residue stretch at 55-148 folds into the BLUF 1 domain; sequence LRRLMYLSAS…GRMYGEWHMK (94 aa). The Guanylate cyclase 1 domain maps to 204 to 332; it reads VLTFIYLVEF…DCINTASRIT (129 aa). The BLUF 2 domain maps to 467-559; sequence LITLTYISQA…RVYGTPLDMT (93 aa). The 130-residue stretch at 615 to 744 folds into the Guanylate cyclase 2 domain; the sequence is VMLATDICSF…EVSARVMAVE (130 aa). Disordered regions lie at residues 801–846, 887–923, and 963–993; these read EDHL…TRPH, QIAA…DQPA, and EGHR…NRAT. Basic residues predominate over residues 821–834; it reads RHQRPGPGRPRRGH.

Belongs to the adenylyl cyclase class-4/guanylyl cyclase family. In terms of assembly, heterotetramer of two alpha and two beta subunits.

The protein localises to the cell projection. The protein resides in the cilium. Its subcellular location is the flagellum. This Euglena gracilis protein is Photoactivated adenylate cyclase subunit alpha-like protein ST-.